The sequence spans 463 residues: MKQILVVGDLIADYYLWGRSERLSPEAPVPVLEVQRESKNLGGAANVANNLISLKAKVFLCGVVGDDLEGEHFINALKARNIDTSCILTDKTRCTTLKTRIIAQNQQIVRVDKEIKDPLNADLRKKLLDFFTEKIQEIDGVILSDYNKGVLDFELTQKMIALANKHHKLILCDPKGKDYSKYAHASLITPNRIELEHALHLKLDSHANLSKALQILKETYHIAMPLVTLSEQGIAFLEKGELVNCPTIAKEVYDVTGAGDTVIASLTLSLLESMSLKEACEFANAAAAVVVGKMGSALASLEEIALILNQTHPKILPLEKLLETLEHHQQKIVFTNGCFDILHKGHASYLQKAKALGDILIVGLNSDASVKRLKGDKRPIVSEKDRAFLLASLSCVDYVVVFEEDTPIKLIQALKPDILVKGADYLNKEIIGSEFAKETRLMEFEEGYSTSAIIERIKRTCND.

The tract at residues 1-311 is ribokinase; that stretch reads MKQILVVGDL…EEIALILNQT (311 aa). 191 to 194 is an ATP binding site; that stretch reads NRIE. Aspartate 260 is an active-site residue. Residues 334–463 form a cytidylyltransferase region; the sequence is FTNGCFDILH…IERIKRTCND (130 aa).

It in the N-terminal section; belongs to the carbohydrate kinase PfkB family. This sequence in the C-terminal section; belongs to the cytidylyltransferase family. Homodimer.

The catalysed reaction is D-glycero-beta-D-manno-heptose 7-phosphate + ATP = D-glycero-beta-D-manno-heptose 1,7-bisphosphate + ADP + H(+). The enzyme catalyses D-glycero-beta-D-manno-heptose 1-phosphate + ATP + H(+) = ADP-D-glycero-beta-D-manno-heptose + diphosphate. The protein operates within nucleotide-sugar biosynthesis; ADP-L-glycero-beta-D-manno-heptose biosynthesis; ADP-L-glycero-beta-D-manno-heptose from D-glycero-beta-D-manno-heptose 7-phosphate: step 1/4. It participates in nucleotide-sugar biosynthesis; ADP-L-glycero-beta-D-manno-heptose biosynthesis; ADP-L-glycero-beta-D-manno-heptose from D-glycero-beta-D-manno-heptose 7-phosphate: step 3/4. Its function is as follows. Catalyzes the phosphorylation of D-glycero-D-manno-heptose 7-phosphate at the C-1 position to selectively form D-glycero-beta-D-manno-heptose-1,7-bisphosphate. Functionally, catalyzes the ADP transfer from ATP to D-glycero-beta-D-manno-heptose 1-phosphate, yielding ADP-D-glycero-beta-D-manno-heptose. This is Bifunctional protein HldE from Helicobacter pylori (strain Shi470).